The chain runs to 111 residues: Large ribosomal subunit protein P2 (111 aa).

Positions 63-84 (ASMPTGGAPAAAAGGAATAPAA) are enriched in low complexity. Positions 63–111 (ASMPTGGAPAAAAGGAATAPAAEAKEAKKEEKKEESEEEDEDMGFGLFD) are disordered. Basic and acidic residues predominate over residues 85–97 (EAKEAKKEEKKEE). Phosphoserine is present on serine 98.

As to quaternary structure, part of the ribosomal stalk of the large ribosomal subunit; P1 and P2 exist as dimers which assemble on the P0 scaffold.

Plays an important role in the elongation step of protein synthesis. The protein is Large ribosomal subunit protein P2 of Artemia salina (Brine shrimp).